The primary structure comprises 451 residues: Prenyltransferase anuH (451 aa).

Residues R105, K189, Y191, K257, Y259, and Y422 each contribute to the dimethylallyl diphosphate site.

The protein belongs to the tryptophan dimethylallyltransferase family.

The enzyme catalyses (8S)-annullatin E + dimethylallyl diphosphate = (8S)-annullatin J + diphosphate. It functions in the pathway secondary metabolite biosynthesis. Its function is as follows. Cytochrome P450 monooxygenase; part of the gene cluster that mediates the biosynthesis of annullatin D, an alkylated aromatic polyketide with a fused dihydrobenzofuran lactone ring system that exhibits potent agonistic activities toward the cannabinoid receptors. Within the pathway, anuH uses dimethylallyl diphosphate (DMAPP) to prenylate (8S)-annullatin E to produce (8S)-annullatin J. Geranyl and farnesyl diphosphate are not consumed by anuH for prenylation. 2-hydroxymethyl-3-pentylphenol, without the hydroxyl group at the side chain, is also accepted by anuH, but only with low conversion yield. The annullatin backbone 2-hydroxymethyl-3-pentylphenol is assembled from one acetyl-CoA starter unit and 5 malonyl-CoA elongation units by cooperation of the highly reducing polyketide synthase anuA, the short-chain dehydrogenase anuB and the oxidoreductase anuC, before being hydroxylated at the C-5 alkyl chain by the cytochrome P450 monooxygenase anuE to form (8S)-annullatin E. The prenyltransferase anuH subsequently installs one isoprenyl group at the benzene ring to form (8S)-annullatin J. Enzymatic or nonenzymatic dihydro-benzofuran ring formation between the prenyl and the phenolic hydroxyl groups in (8S)-annullatin J results in two diastereomers (2S,9S)-annullatin H and compound 12. The intermediate (2S,9S)-annullatin H is then converted to (2S,9S)-annullatin D by the FAD-linked oxidoreductase anuG-catalyzed five-member lactone ring formation. The isomer 12 acts as a substrate for the short-chain dehydrogenase anuF and is oxidized to (2R)-annullatin F, which is subsequently acetylated by an acetyltransferase leading to (2R)-annullatin G formation. The remaining enzymes identified within the cluster, anuD, anuI and anuJ, seem not to be involved in annullatin biosynthesis. The sequence is that of Prenyltransferase anuH from Penicillium roqueforti (strain FM164).